We begin with the raw amino-acid sequence, 219 residues long: MILTIDEVLTAEELAEMKDVLATADFVDGKTTAGWHAKLVKNNTQLAGKAACSMDLKERVKSALLRHPLFKVAIQPRSIHTLLFSRYQEGMSYGDHVDNAFMGGARSDVSFTLFLNAPEDYTGGELCVELADGVHTYKLAAGSAIAYPSSTIHRVETVTSGTRLVAVGWVQSLVRDVQQRELLFDLDTARRSLFATHGKTPEFDLISKSHANLLRQWAE.

The Fe2OG dioxygenase domain maps to 78 to 172; the sequence is SIHTLLFSRY…RLVAVGWVQS (95 aa). His-96, Asp-98, and His-153 together coordinate Fe cation. Arg-163 contacts 2-oxoglutarate.

Fe(2+) serves as cofactor. The cofactor is L-ascorbate.

The chain is PKHD-type hydroxylase AM1_3707 from Acaryochloris marina (strain MBIC 11017).